We begin with the raw amino-acid sequence, 1960 residues long: Myosin-9 (1960 aa).

N-acetylalanine is present on Ala2. Residues 2–838 are mediates interaction with LIMCH1; that stretch reads AQQAADKYLY…RLFTKVKPLL (837 aa). An N6-acetyllysine modification is found at Lys8. At Tyr11 the chain carries Phosphotyrosine. One can recognise a Myosin N-terminal SH3-like domain in the interval 27–77; sequence AAKKLVWVPSSKNGFEPASLKEEVGEEAIVELVENGKKVKVNKDDIQKMNP. Residues 81-776 enclose the Myosin motor domain; the sequence is SKVEDMAELT…VLAHLEEERD (696 aa). The residue at position 102 (Lys102) is an N6-acetyllysine. 174–181 is a binding site for ATP; the sequence is GESGAGKT. Residues Lys299, Lys435, and Lys613 each carry the N6-acetyllysine modification. The residue at position 628 (Ser628) is a Phosphoserine. An actin-binding region spans residues 654-676; it reads LAKLMATLRNTNPNFVRCIIPNH. Tyr754 bears the Phosphotyrosine mark. The IQ domain maps to 779-808; sequence ITDVIIGFQACCRGYLARKAFAKRQQQLTA. Positions 841–1926 form a coiled coil; the sequence is IRHEDELLAK…LKNKLRRGDL (1086 aa). Residue Lys850 is modified to N6-succinyllysine. Lys860, Lys975, and Lys1024 each carry N6-acetyllysine. Residues 1035–1055 show a composition bias toward basic and acidic residues; sequence RLRREEKQRQELEKTRRKLEG. Positions 1035–1057 are disordered; the sequence is RLRREEKQRQELEKTRRKLEGDS. At Ser1114 the chain carries Phosphoserine. Residues 1117-1167 are disordered; sequence QEDLESERASRNKAEKQKRDLGEELEALKTELEDTLDSTAAQQELRSKREQ. The span at 1122–1148 shows a compositional bias: basic and acidic residues; that stretch reads SERASRNKAEKQKRDLGEELEALKTEL. 2 positions are modified to N6-acetyllysine: Lys1234 and Lys1249. Residues 1327–1352 are disordered; the sequence is LSTKLKQMEDEKNSFREQLEEEEEAK. Residues 1332-1352 show a composition bias toward basic and acidic residues; sequence KQMEDEKNSFREQLEEEEEAK. N6-acetyllysine occurs at positions 1357, 1392, 1404, 1410, 1459, and 1638. Lys1669 is subject to N6-succinyllysine. Position 1714 is a phosphoserine (Ser1714). The tract at residues 1768–1788 is disordered; sequence LERSHAQKNENARQQLERQNK. Residues Lys1793, Lys1802, and Lys1845 each carry the N6-acetyllysine modification. The tract at residues 1877-1908 is disordered; sequence RQLEEAEEEAQRANASRRKLQRELEDATETAD. Position 1923 is an omega-N-methylarginine (Arg1923). The residue at position 1939 (Thr1939) is a Phosphothreonine. The interval 1939–1960 is disordered; it reads TGDCSDEEVDGKADGADAKAAE. Ser1943 bears the Phosphoserine mark. Residues 1948-1960 are compositionally biased toward basic and acidic residues; the sequence is DGKADGADAKAAE.

Belongs to the TRAFAC class myosin-kinesin ATPase superfamily. Myosin family. In terms of assembly, myosin is a hexameric protein that consists of 2 heavy chain subunits (MHC), 2 alkali light chain subunits (MLC) and 2 regulatory light chain subunits (MLC-2). Interacts with RASIP1. Interacts with DDR1. Interacts with PDLIM2. Interacts with SVIL. Interacts with HTRA3. Interacts with Myo7a. Interacts with CFAP95. Interacts with LIMCH1; independently of the integration of MYH9 into the myosin complex. Interacts with RAB3A. Interacts with ZBED4. Interacts with S100A4; this interaction increases cell motility. Post-translationally, ISGylated. Ubiquitination.

The protein localises to the cytoplasm. It localises to the cytoskeleton. It is found in the cell cortex. The protein resides in the cytoplasmic vesicle. Its subcellular location is the secretory vesicle. The protein localises to the cortical granule. Cellular myosin that appears to play a role in cytokinesis, cell shape, and specialized functions such as secretion and capping. Required for cortical actin clearance prior to oocyte exocytosis. Promotes cell motility in conjunction with S100A4. During cell spreading, plays an important role in cytoskeleton reorganization, focal contact formation (in the margins but not the central part of spreading cells), and lamellipodial retraction; this function is mechanically antagonized by MYH10. The chain is Myosin-9 (Myh9) from Mus musculus (Mouse).